The sequence spans 373 residues: Spermidine/putrescine import ATP-binding protein PotA (373 aa).

The region spanning Phe8–Val238 is the ABC transporter domain. An ATP-binding site is contributed by Gly40 to Thr47.

The protein belongs to the ABC transporter superfamily. Spermidine/putrescine importer (TC 3.A.1.11.1) family. In terms of assembly, the complex is composed of two ATP-binding proteins (PotA), two transmembrane proteins (PotB and PotC) and a solute-binding protein (PotD).

It localises to the cell inner membrane. It catalyses the reaction ATP + H2O + polyamine-[polyamine-binding protein]Side 1 = ADP + phosphate + polyamineSide 2 + [polyamine-binding protein]Side 1.. In terms of biological role, part of the ABC transporter complex PotABCD involved in spermidine/putrescine import. Responsible for energy coupling to the transport system. This chain is Spermidine/putrescine import ATP-binding protein PotA, found in Oleidesulfovibrio alaskensis (strain ATCC BAA-1058 / DSM 17464 / G20) (Desulfovibrio alaskensis).